The chain runs to 116 residues: CDKN2AIP N-terminal-like protein (116 aa).

M1 bears the N-acetylmethionine mark. The 93-residue stretch at 24 to 116 (AEQFRSYSES…RSELMKKHQS (93 aa)) folds into the XRN2-binding (XTBD) domain.

Belongs to the CARF family. Interacts with XRN2; the interaction is direct.

The sequence is that of CDKN2AIP N-terminal-like protein (CDKN2AIPNL) from Homo sapiens (Human).